Reading from the N-terminus, the 108-residue chain is DNA-binding protein HBbu (108 aa).

It belongs to the bacterial histone-like protein family.

Its function is as follows. Histone-like DNA-binding protein which is capable of wrapping DNA to stabilize it, and thus to prevent its denaturation under extreme environmental conditions. This Borrelia turicatae protein is DNA-binding protein HBbu (hbb).